The sequence spans 436 residues: GTPase Der (436 aa).

EngA-type G domains lie at 4 to 167 (PTIA…PNEE) and 175 to 351 (IKFS…QSQN). Residues 10 to 17 (GRPNVGKS), 57 to 61 (DTGGI), 119 to 122 (NKVD), 181 to 188 (GRPNVGKS), 229 to 233 (DTAGM), and 294 to 297 (NKWD) contribute to the GTP site. The 85-residue stretch at 352–436 (TRIPSAVLND…PIHLIARKRK (85 aa)) folds into the KH-like domain.

Belongs to the TRAFAC class TrmE-Era-EngA-EngB-Septin-like GTPase superfamily. EngA (Der) GTPase family. Associates with the 50S ribosomal subunit.

Its function is as follows. GTPase that plays an essential role in the late steps of ribosome biogenesis. This chain is GTPase Der, found in Streptococcus sanguinis (strain SK36).